Reading from the N-terminus, the 432-residue chain is Anaerobic glycerol-3-phosphate dehydrogenase subunit B (432 aa).

The protein belongs to the anaerobic G-3-P dehydrogenase subunit B family. As to quaternary structure, composed of a catalytic GlpA/B dimer and of membrane bound GlpC. The cofactor is FMN.

The catalysed reaction is a quinone + sn-glycerol 3-phosphate = dihydroxyacetone phosphate + a quinol. It functions in the pathway polyol metabolism; glycerol degradation via glycerol kinase pathway; glycerone phosphate from sn-glycerol 3-phosphate (anaerobic route): step 1/1. Functionally, conversion of glycerol 3-phosphate to dihydroxyacetone. Uses fumarate or nitrate as electron acceptor. In Haemophilus influenzae (strain 86-028NP), this protein is Anaerobic glycerol-3-phosphate dehydrogenase subunit B.